A 149-amino-acid polypeptide reads, in one-letter code: Protein FAM72A (149 aa).

The protein belongs to the FAM72 family. In terms of assembly, interacts with UNG. May be up-regulated in malignant colon cancers, compared to normal colon and colon adenomas. Expression is also elevated in other common cancer types, including breast, lung, uterus, and ovary.

The protein localises to the cytoplasm. The protein resides in the mitochondrion. In terms of biological role, may play a role in the regulation of cellular reactive oxygen species metabolism. May participate in cell growth regulation. The polypeptide is Protein FAM72A (FAM72A) (Homo sapiens (Human)).